We begin with the raw amino-acid sequence, 820 residues long: Leucine--tRNA ligase (820 aa).

Positions 42 to 52 match the 'HIGH' region motif; the sequence is PYPSGDLHMGH. Positions 576 to 580 match the 'KMSKS' region motif; sequence KMSKS. Lysine 579 serves as a coordination point for ATP.

It belongs to the class-I aminoacyl-tRNA synthetase family.

The protein localises to the cytoplasm. It catalyses the reaction tRNA(Leu) + L-leucine + ATP = L-leucyl-tRNA(Leu) + AMP + diphosphate. This is Leucine--tRNA ligase from Coxiella burnetii (strain Dugway 5J108-111).